A 323-amino-acid chain; its full sequence is Tetraacyldisaccharide 4'-kinase (323 aa).

ATP is bound at residue 56-63; it reads TVGGVGKT.

The protein belongs to the LpxK family.

It catalyses the reaction a lipid A disaccharide + ATP = a lipid IVA + ADP + H(+). Its pathway is glycolipid biosynthesis; lipid IV(A) biosynthesis; lipid IV(A) from (3R)-3-hydroxytetradecanoyl-[acyl-carrier-protein] and UDP-N-acetyl-alpha-D-glucosamine: step 6/6. Transfers the gamma-phosphate of ATP to the 4'-position of a tetraacyldisaccharide 1-phosphate intermediate (termed DS-1-P) to form tetraacyldisaccharide 1,4'-bis-phosphate (lipid IVA). This Legionella pneumophila (strain Corby) protein is Tetraacyldisaccharide 4'-kinase.